Here is a 787-residue protein sequence, read N- to C-terminus: Aconitate hydratase, mitochondrial (787 aa).

Residues 1-33 constitute a mitochondrion transit peptide; it reads MISTRLARAGALAPKSRLFLGTRAFATVGDSPL. Residues Gln104 and 197–199 contribute to the substrate site; that span reads DSH. [4Fe-4S] cluster-binding residues include Cys390, Cys453, and Cys456. 2 residues coordinate substrate: Arg479 and Arg484. A disordered region spans residues 529-559; it reads LQPPTGEGLPAKGYDPGRDTYQAPPADRSSV. Residues Arg612 and 675–676 each bind substrate; that span reads SR.

This sequence belongs to the aconitase/IPM isomerase family. Requires [4Fe-4S] cluster as cofactor.

The protein localises to the mitochondrion. The catalysed reaction is citrate = D-threo-isocitrate. It catalyses the reaction (2R)-homocitrate = cis-homoaconitate + H2O. It participates in carbohydrate metabolism; tricarboxylic acid cycle; isocitrate from oxaloacetate: step 2/2. Its pathway is amino-acid biosynthesis; L-lysine biosynthesis via AAA pathway; L-alpha-aminoadipate from 2-oxoglutarate: step 2/5. In terms of biological role, catalyzes the isomerization of citrate to isocitrate via cis-aconitate, a step in the citric acid cycle. Also catalyzes the reversible dehydration of (R)-homocitrate to cis-homoaconitate, a step in the alpha-aminoadipate pathway for lysine biosynthesis. This chain is Aconitate hydratase, mitochondrial (acoA), found in Aspergillus fumigatus (strain ATCC MYA-4609 / CBS 101355 / FGSC A1100 / Af293) (Neosartorya fumigata).